The primary structure comprises 614 residues: Probable Xaa-Pro aminopeptidase P (614 aa).

4 residues coordinate Mn(2+): D411, D422, E520, and E534.

It belongs to the peptidase M24B family. Mn(2+) is required as a cofactor.

It catalyses the reaction Release of any N-terminal amino acid, including proline, that is linked to proline, even from a dipeptide or tripeptide.. Its function is as follows. Catalyzes the removal of a penultimate prolyl residue from the N-termini of peptides. This Sordaria macrospora (strain ATCC MYA-333 / DSM 997 / K(L3346) / K-hell) protein is Probable Xaa-Pro aminopeptidase P (AMPP).